The primary structure comprises 88 residues: Small ribosomal subunit protein uS19 (88 aa).

Belongs to the universal ribosomal protein uS19 family.

Functionally, protein S19 forms a complex with S13 that binds strongly to the 16S ribosomal RNA. The chain is Small ribosomal subunit protein uS19 from Chlamydia caviae (strain ATCC VR-813 / DSM 19441 / 03DC25 / GPIC) (Chlamydophila caviae).